Consider the following 311-residue polypeptide: Tryptophan 2,3-dioxygenase (311 aa).

The disordered stretch occupies residues 1–37 (MQPPGGDAPAGCPFSGARAAQPAQAAHEAPHVPGEAD). Residues 17–27 (ARAAQPAQAAH) are compositionally biased toward low complexity. Residues 80-84 (FIIQH), Y142, and R146 contribute to the substrate site. Residue H269 coordinates heme. Position 283 (T283) interacts with substrate.

The protein belongs to the tryptophan 2,3-dioxygenase family. In terms of assembly, homotetramer. The cofactor is heme.

It carries out the reaction L-tryptophan + O2 = N-formyl-L-kynurenine. It functions in the pathway amino-acid degradation; L-tryptophan degradation via kynurenine pathway; L-kynurenine from L-tryptophan: step 1/2. Its function is as follows. Heme-dependent dioxygenase that catalyzes the oxidative cleavage of the L-tryptophan (L-Trp) pyrrole ring and converts L-tryptophan to N-formyl-L-kynurenine. Catalyzes the oxidative cleavage of the indole moiety. This Burkholderia cenocepacia (strain ATCC BAA-245 / DSM 16553 / LMG 16656 / NCTC 13227 / J2315 / CF5610) (Burkholderia cepacia (strain J2315)) protein is Tryptophan 2,3-dioxygenase.